Reading from the N-terminus, the 232-residue chain is tRNA1(Val) (adenine(37)-N6)-methyltransferase (232 aa).

It belongs to the methyltransferase superfamily. tRNA (adenine-N(6)-)-methyltransferase family.

It is found in the cytoplasm. It catalyses the reaction adenosine(37) in tRNA1(Val) + S-adenosyl-L-methionine = N(6)-methyladenosine(37) in tRNA1(Val) + S-adenosyl-L-homocysteine + H(+). Specifically methylates the adenine in position 37 of tRNA(1)(Val) (anticodon cmo5UAC). The sequence is that of tRNA1(Val) (adenine(37)-N6)-methyltransferase from Haemophilus influenzae (strain 86-028NP).